The sequence spans 496 residues: Cytosol aminopeptidase (496 aa).

Positions 258 and 263 each coordinate Mn(2+). Residue Lys-270 is part of the active site. Residues Asp-281, Asp-340, and Glu-342 each contribute to the Mn(2+) site. Residue Arg-344 is part of the active site.

It belongs to the peptidase M17 family. Mn(2+) is required as a cofactor.

It is found in the cytoplasm. The catalysed reaction is Release of an N-terminal amino acid, Xaa-|-Yaa-, in which Xaa is preferably Leu, but may be other amino acids including Pro although not Arg or Lys, and Yaa may be Pro. Amino acid amides and methyl esters are also readily hydrolyzed, but rates on arylamides are exceedingly low.. It carries out the reaction Release of an N-terminal amino acid, preferentially leucine, but not glutamic or aspartic acids.. Presumably involved in the processing and regular turnover of intracellular proteins. Catalyzes the removal of unsubstituted N-terminal amino acids from various peptides. This Helicobacter pylori (strain J99 / ATCC 700824) (Campylobacter pylori J99) protein is Cytosol aminopeptidase (pepA).